Reading from the N-terminus, the 196-residue chain is uncharacterized protein (196 aa).

Positions 58 to 163 constitute a Bro-N domain; sequence HKFFDAIKDS…IILPNNYHKN (106 aa).

This is an uncharacterized protein from Acanthamoeba polyphaga mimivirus (APMV).